The primary structure comprises 248 residues: DNA polymerase sliding clamp (248 aa).

It belongs to the PCNA family. In terms of assembly, homotrimer. The subunits circularize to form a toroid; DNA passes through its center. Replication factor C (RFC) is required to load the toroid on the DNA.

Sliding clamp subunit that acts as a moving platform for DNA processing. Responsible for tethering the catalytic subunit of DNA polymerase and other proteins to DNA during high-speed replication. This chain is DNA polymerase sliding clamp, found in Nitrosopumilus maritimus (strain SCM1).